Reading from the N-terminus, the 118-residue chain is Non-specific lipid-transfer protein A (118 aa).

Positions 1–25 are cleaved as a signal peptide; the sequence is MAGVMKLACLVLACMIVAGPITANR. 4 disulfide bridges follow: cysteine 29/cysteine 76, cysteine 39/cysteine 53, cysteine 54/cysteine 100, and cysteine 74/cysteine 114.

Belongs to the plant LTP family.

Functionally, plant non-specific lipid-transfer proteins transfer phospholipids as well as galactolipids across membranes. May play a role in wax or cutin deposition in the cell walls of expanding epidermal cells and certain secretory tissues. In Brassica oleracea var. italica (Broccoli), this protein is Non-specific lipid-transfer protein A (WAX9A).